A 236-amino-acid polypeptide reads, in one-letter code: Small ribosomal subunit protein uS2c (236 aa).

This sequence belongs to the universal ribosomal protein uS2 family.

It is found in the plastid. It localises to the chloroplast. The polypeptide is Small ribosomal subunit protein uS2c (rps2) (Buxus microphylla (Littleleaf boxwood)).